The chain runs to 468 residues: ATP synthase subunit beta 1 (468 aa).

155-162 is an ATP binding site; sequence GGAGVGKT.

It belongs to the ATPase alpha/beta chains family. As to quaternary structure, F-type ATPases have 2 components, CF(1) - the catalytic core - and CF(0) - the membrane proton channel. CF(1) has five subunits: alpha(3), beta(3), gamma(1), delta(1), epsilon(1). CF(0) has three main subunits: a(1), b(2) and c(9-12). The alpha and beta chains form an alternating ring which encloses part of the gamma chain. CF(1) is attached to CF(0) by a central stalk formed by the gamma and epsilon chains, while a peripheral stalk is formed by the delta and b chains.

The protein localises to the cell inner membrane. It carries out the reaction ATP + H2O + 4 H(+)(in) = ADP + phosphate + 5 H(+)(out). In terms of biological role, produces ATP from ADP in the presence of a proton gradient across the membrane. The catalytic sites are hosted primarily by the beta subunits. In Syntrophotalea carbinolica (strain DSM 2380 / NBRC 103641 / GraBd1) (Pelobacter carbinolicus), this protein is ATP synthase subunit beta 1.